The following is a 216-amino-acid chain: Protein Syd (216 aa).

This sequence belongs to the Syd family.

It is found in the cell inner membrane. Its function is as follows. Interacts with the SecY protein in vivo. May bind preferentially to an uncomplexed state of SecY, thus functioning either as a chelating agent for excess SecY in the cell or as a regulatory factor that negatively controls the translocase function. The polypeptide is Protein Syd (Shewanella sp. (strain MR-4)).